The primary structure comprises 199 residues: Dephospho-CoA kinase (199 aa).

Residues 3-199 (VLGLTGSIGM…AAAKMPRRRD (197 aa)) form the DPCK domain. Position 11–16 (11–16 (GMGKST)) interacts with ATP.

The protein belongs to the CoaE family.

The protein resides in the cytoplasm. It catalyses the reaction 3'-dephospho-CoA + ATP = ADP + CoA + H(+). It functions in the pathway cofactor biosynthesis; coenzyme A biosynthesis; CoA from (R)-pantothenate: step 5/5. Its function is as follows. Catalyzes the phosphorylation of the 3'-hydroxyl group of dephosphocoenzyme A to form coenzyme A. The sequence is that of Dephospho-CoA kinase from Rhodopseudomonas palustris (strain ATCC BAA-98 / CGA009).